The sequence spans 272 residues: Ribosome maturation factor RimP (272 aa).

Residues 209-272 (QNLGILPPPP…RGDIDPPEGD (64 aa)) form a disordered region. Residues 250 to 266 (NTKEHRLAAERLRRGDI) show a composition bias toward basic and acidic residues.

The protein belongs to the RimP family.

It localises to the cytoplasm. Required for maturation of 30S ribosomal subunits. The sequence is that of Ribosome maturation factor RimP from Rhodopseudomonas palustris (strain BisA53).